Here is a 241-residue protein sequence, read N- to C-terminus: MASHRPRSNKAANGASTSPKRSWIIVSAALVGFCALIAALDSIRSSFYIFDHKAIYKIASTAVANHPGNATAIFDDVLDNLRADPKLAPYINKNHFSDESEWMFNNAGGAMGSMFIIHASVTEYLIFFGTPVGTEGHTGRHTADDYFNILTGNQYAFPAGALKAEHYPAGSVHHLRRGTVKQYMMPEDGCWALELAQGWIPPMLPFGLADVLSSTLDLPTFGITVWITAREMVGNLLIGKF.

A helical membrane pass occupies residues 23-43; sequence WIIVSAALVGFCALIAALDSI.

Belongs to the ERG2 family.

The protein localises to the endoplasmic reticulum membrane. It participates in steroid metabolism; ergosterol biosynthesis; ergosterol from zymosterol: step 2/5. Its function is as follows. Catalyzes the reaction which results in unsaturation at C-7 in the B ring of sterols. The sequence is that of C-8 sterol isomerase (ERG2) from Mycosarcoma maydis (Corn smut fungus).